The sequence spans 342 residues: Tetraacyldisaccharide 4'-kinase (342 aa).

68–75 contributes to the ATP binding site; it reads TVGGTGKT.

It belongs to the LpxK family.

The catalysed reaction is a lipid A disaccharide + ATP = a lipid IVA + ADP + H(+). The protein operates within glycolipid biosynthesis; lipid IV(A) biosynthesis; lipid IV(A) from (3R)-3-hydroxytetradecanoyl-[acyl-carrier-protein] and UDP-N-acetyl-alpha-D-glucosamine: step 6/6. In terms of biological role, transfers the gamma-phosphate of ATP to the 4'-position of a tetraacyldisaccharide 1-phosphate intermediate (termed DS-1-P) to form tetraacyldisaccharide 1,4'-bis-phosphate (lipid IVA). The protein is Tetraacyldisaccharide 4'-kinase of Burkholderia cenocepacia (strain ATCC BAA-245 / DSM 16553 / LMG 16656 / NCTC 13227 / J2315 / CF5610) (Burkholderia cepacia (strain J2315)).